The following is a 357-amino-acid chain: Cytochrome c peroxidase, mitochondrial (357 aa).

Residues 1–23 (MSATALRIAPIASRTFQRRLGYL) constitute a mitochondrion transit peptide. Residue histidine 116 is the Proton acceptor of the active site. The tract at residues 189–212 (PWRSGRTDLPEDMTPDNGRLPDGD) is disordered. Histidine 239 contributes to the heme b binding site. Tryptophan 255 (tryptophan radical intermediate) is an active-site residue.

Belongs to the peroxidase family. Cytochrome c peroxidase subfamily. As to quaternary structure, forms a one-to-one complex with cytochrome c. Heme b serves as cofactor.

The protein resides in the mitochondrion matrix. It localises to the mitochondrion intermembrane space. The enzyme catalyses 2 Fe(II)-[cytochrome c] + H2O2 + 2 H(+) = 2 Fe(III)-[cytochrome c] + 2 H2O. Functionally, destroys radicals which are normally produced within the cells and which are toxic to biological systems. This is Cytochrome c peroxidase, mitochondrial from Candida glabrata (strain ATCC 2001 / BCRC 20586 / JCM 3761 / NBRC 0622 / NRRL Y-65 / CBS 138) (Yeast).